The primary structure comprises 390 residues: Succinate--CoA ligase [ADP-forming] subunit beta (390 aa).

The ATP-grasp domain occupies 9–245 (KHLLKKYNIP…TTQEDEHETM (237 aa)). ATP-binding positions include Lys-46, 53–55 (GRG), Glu-99, Ser-102, and Glu-107. The Mg(2+) site is built by Asn-200 and Asp-214. Residues Asn-265 and 322 to 324 (GIV) each bind substrate.

This sequence belongs to the succinate/malate CoA ligase beta subunit family. In terms of assembly, heterotetramer of two alpha and two beta subunits. The cofactor is Mg(2+).

The catalysed reaction is succinate + ATP + CoA = succinyl-CoA + ADP + phosphate. The enzyme catalyses GTP + succinate + CoA = succinyl-CoA + GDP + phosphate. It participates in carbohydrate metabolism; tricarboxylic acid cycle; succinate from succinyl-CoA (ligase route): step 1/1. In terms of biological role, succinyl-CoA synthetase functions in the citric acid cycle (TCA), coupling the hydrolysis of succinyl-CoA to the synthesis of either ATP or GTP and thus represents the only step of substrate-level phosphorylation in the TCA. The beta subunit provides nucleotide specificity of the enzyme and binds the substrate succinate, while the binding sites for coenzyme A and phosphate are found in the alpha subunit. This chain is Succinate--CoA ligase [ADP-forming] subunit beta, found in Coxiella burnetii (strain RSA 331 / Henzerling II).